The primary structure comprises 426 residues: Cytochrome c biogenesis protein Ccs1 (426 aa).

The next 3 membrane-spanning stretches (helical) occupy residues Leu-11 to Ile-31, Asn-70 to Phe-90, and Ile-153 to Ser-173.

It belongs to the Ccs1/CcsB family. May interact with CcsA.

The protein resides in the plastid. It localises to the chloroplast thylakoid membrane. Required during biogenesis of c-type cytochromes (cytochrome c6 and cytochrome f) at the step of heme attachment. In Heterosigma akashiwo (strain CCMP452 / OLISTH), this protein is Cytochrome c biogenesis protein Ccs1.